Here is a 429-residue protein sequence, read N- to C-terminus: Formate-dependent phosphoribosylglycinamide formyltransferase (429 aa).

N(1)-(5-phospho-beta-D-ribosyl)glycinamide-binding positions include 26–27 (EL) and Glu86. ATP contacts are provided by residues Arg118, Lys159, 199-202 (EEHI), and Glu207. An ATP-grasp domain is found at 123–319 (ETLVKEAKVP…EFGLHLRAVL (197 aa)). Positions 276 and 288 each coordinate Mg(2+). Residues Asp295, Lys375, and 382–383 (RR) each bind N(1)-(5-phospho-beta-D-ribosyl)glycinamide.

Belongs to the PurK/PurT family. In terms of assembly, homodimer.

It catalyses the reaction N(1)-(5-phospho-beta-D-ribosyl)glycinamide + formate + ATP = N(2)-formyl-N(1)-(5-phospho-beta-D-ribosyl)glycinamide + ADP + phosphate + H(+). It functions in the pathway purine metabolism; IMP biosynthesis via de novo pathway; N(2)-formyl-N(1)-(5-phospho-D-ribosyl)glycinamide from N(1)-(5-phospho-D-ribosyl)glycinamide (formate route): step 1/1. In terms of biological role, involved in the de novo purine biosynthesis. Catalyzes the transfer of formate to 5-phospho-ribosyl-glycinamide (GAR), producing 5-phospho-ribosyl-N-formylglycinamide (FGAR). Formate is provided by PurU via hydrolysis of 10-formyl-tetrahydrofolate. The protein is Formate-dependent phosphoribosylglycinamide formyltransferase of Pyrococcus furiosus (strain ATCC 43587 / DSM 3638 / JCM 8422 / Vc1).